Reading from the N-terminus, the 425-residue chain is Glucose-6-phosphate 1-dehydrogenase (425 aa).

Residues R44 and K135 each coordinate NADP(+). Residues H165, K169, E201, and D220 each coordinate substrate. The Proton acceptor role is filled by H225. Position 311 (K311) interacts with substrate.

Belongs to the glucose-6-phosphate dehydrogenase family.

The catalysed reaction is D-glucose 6-phosphate + NADP(+) = 6-phospho-D-glucono-1,5-lactone + NADPH + H(+). The protein operates within carbohydrate degradation; pentose phosphate pathway; D-ribulose 5-phosphate from D-glucose 6-phosphate (oxidative stage): step 1/3. Its function is as follows. Catalyzes the oxidation of glucose 6-phosphate to 6-phosphogluconolactone. This is Glucose-6-phosphate 1-dehydrogenase from Helicobacter pylori (strain J99 / ATCC 700824) (Campylobacter pylori J99).